The chain runs to 989 residues: Voltage-gated delayed rectifier potassium channel KCNH1 (989 aa).

Over 1–220 (MTMAGGRRGL…LHYCVFKTTW (220 aa)) the chain is Cytoplasmic. The PAS domain occupies 14-94 (QNTFLENIVR…QTFENYEMNS (81 aa)). Residues 93 to 145 (NSFEILMYKKNRTPVWFFVKIAPIRNEQDKVVLFLCTFSDITAFKQPIEDDSC) enclose the PAC domain. Residues 151–162 (FARLTRALTSSR) form a required for phosphatidylinositol bisphosphate binding region. A helical transmembrane segment spans residues 221 to 241 (DWIILILTFYTAILVPYNVSF). The Extracellular portion of the chain corresponds to 242 to 248 (KTRQNNV). Residues 249–269 (AWLVVDSIVDVIFLVDIVLNF) traverse the membrane as a helical segment. The Cytoplasmic portion of the chain corresponds to 270 to 290 (HTTFVGPAGEVISDPKLIRMN). A helical transmembrane segment spans residues 291 to 309 (YLKTWFVIDLLSCLPYDVI). The Extracellular portion of the chain corresponds to 310-345 (NAFENVDEVSAFMGDPGKIGFADQIPPPLEGRESQG). Residues 346–368 (ISSLFSSLKVVRLLRLGRVARKL) form a helical; Voltage-sensor membrane-spanning segment. Topologically, residues 369–377 (DHYIEYGAA) are cytoplasmic. The chain crosses the membrane as a helical span at residues 378-399 (VLVLLVCVFGLAAHWMACIWYS). The Extracellular segment spans residues 400–448 (IGDYEIFDEDTKTIRNNSWLYQLAMDIGTPYQFNGSGSGKWEGGPSKNS). N415 and N433 each carry an N-linked (GlcNAc...) asparagine glycan. An intramembrane region (pore-forming) is located at residues 449–470 (VYISSLYFTMTSLTSVGFGNIA). Positions 463-468 (SVGFGN) match the Selectivity filter motif. Residues 471 to 477 (PSTDIEK) are Extracellular-facing. A helical membrane pass occupies residues 478-498 (IFAVAIMMIGSLLYATIFGNV). The Cytoplasmic segment spans residues 499-989 (TTIFQQMYAN…ESERDIFGAS (491 aa)). The interval 673-770 (KRDALQKVLE…LDDLDVEKGN (98 aa)) is calmodulin-binding. Positions 699-701 (YNL) are interaction with cyclic nucleotide-binding pocket. A compositionally biased stretch (basic and acidic residues) spans 855–879 (KAESMETLPERTKASGEATLKKTDS). Disordered regions lie at residues 855–886 (KAES…GITK) and 962–989 (RSSQ…FGAS). A CAD (involved in subunit assembly) region spans residues 924-964 (ATVLEVRHELKEDIKALNAKMTNIEKQLSEILRILTSRRSS). Phosphoserine occurs at positions 974, 978, and 981. Over residues 980-989 (ESERDIFGAS) the composition is skewed to basic and acidic residues.

The protein belongs to the potassium channel family. H (Eag) (TC 1.A.1.20) subfamily. Kv10.1/KCNH1 sub-subfamily. Homomultimer. The potassium channel is composed of a homo- or heterotetrameric complex of pore-forming alpha subunits that can associate with modulating beta subunits. Heteromultimer with KCNH5/EAG2. Interacts with ALG10B. Interacts with RABEP1. Interacts (via C-terminus) with CTTN. Interacts (via C-terminal cytoplasmic region) with Ca(2+)-bound calmodulin. Interacts with the spider kappa-theraphotoxin-Aa1a and mu/kappa-theraphotoxin-Ap1a. Channel activity is regulated via tyrosine phosphorylation/dephosphorylation by SRC and PTPN6. As to expression, highly expressed in brain and in myoblasts at the onset of fusion, but not in other tissues. Detected in HeLa (cervical carcinoma), SH-SY5Y (neuroblastoma) and MCF-7 (epithelial tumor) cells, but not in normal epithelial cells.

The protein localises to the cell membrane. It is found in the nucleus inner membrane. The protein resides in the cell projection. Its subcellular location is the dendrite. It localises to the axon. The protein localises to the presynaptic cell membrane. It is found in the perikaryon. The protein resides in the postsynaptic density membrane. Its subcellular location is the early endosome membrane. The catalysed reaction is K(+)(in) = K(+)(out). Its activity is regulated as follows. Channel activity is inhibited by interaction with Ca(2+)-bound calmodulin. Interaction of a single pore-forming alpha subunit with a calmodulin chain is sufficient to promote channel closure. Channel activity is not regulated by cyclic nucleotides. Channel activity is inhibited by binding intracellular phosphatidylinositol-3,5-bisphosphate and phosphatidylinositol-4,5-bisphosphate (PIP2), but is not inhibited by phosphatidylinositol 4-phosphate. Inhibited by the spider kappa-theraphotoxin-Aa1a and mu/kappa-theraphotoxin-Ap1a. Pore-forming (alpha) subunit of a voltage-gated delayed rectifier potassium channel that mediates outward-rectifying potassium currents which, on depolarization, reaches a steady-state level and do not inactivate. The activation kinetics depend on the prepulse potential and external divalent cation concentration. With negative prepulses, the current activation is delayed and slowed down several fold, whereas more positive prepulses speed up activation. The time course of activation is biphasic with a fast and a slowly activating current component. Activates at more positive membrane potentials and exhibit a steeper activation curve. Channel properties are modulated by subunit assembly. Mediates IK(NI) current in myoblasts. Involved in the regulation of cell proliferation and differentiation, in particular adipogenic and osteogenic differentiation in bone marrow-derived mesenchymal stem cells (MSCs). The polypeptide is Voltage-gated delayed rectifier potassium channel KCNH1 (Homo sapiens (Human)).